The primary structure comprises 1143 residues: AP-3 complex subunit delta (1143 aa).

HEAT repeat units follow at residues 129–166 (DLARELANDILTLLSTQKTHILKRAITVLYKIFLRYPE), 167–203 (SLRPAFPKLREKLDDPEPSVVSCSVNVICELARRNPK), 205–242 (YLPLAPVLFRILTNTTNNYWMLIKIVKLFAALTPHEPR), 245–279 (KKLIDPLTNIINSSPSVSLLYECIQTCITGMSDHI), 280–317 (PLMKLCISKLRTLIEHNDQNLKYLGLLALNNIMKIHPK), 318–354 (AVSEHRDLVLNCLEDDDISIRLRALDLLPGMTSKKNI), 356–389 (DIVFKLLDHLDNAEGQYKEQIIEKIIELCSMGTY), and 416–455 (LIASQLLDVVIRVKIVRAYSTRQMIELLKNPKLMSNPTEG). Disordered stretches follow at residues 520 to 541 (KIPSLDDDDEEEEAQEEEDQNE), 634 to 692 (QEPI…RHPI), 704 to 728 (KQANNPYMLGGKVSKKLSTNDPENI), 741 to 792 (HVGA…NDAL), and 829 to 899 (KKNA…QAAA). A compositionally biased stretch (acidic residues) spans 524–540 (LDDDDEEEEAQEEEDQN). Residues 526 to 550 (DDDEEEEAQEEEDQNEITHEIVQEC) adopt a coiled-coil conformation. The span at 653–662 (HQKKHHKHHR) shows a compositional bias: basic residues. Over residues 666–675 (DGDDDEDDET) the composition is skewed to acidic residues. Positions 814–835 (TDIIKEKEREMAMLAKKNAKLS) form a coiled coil. Residues 840–849 (PSTANYSEVT) are compositionally biased toward polar residues. Low complexity-rich tracts occupy residues 854 to 867 (APAKKATKKAAAGS) and 881 to 899 (KPAATSSTTTTTKSTQAAA). One can recognise a GAE domain in the interval 914 to 1016 (KTILDDDNFK…FTLLASPSSS (103 aa)).

It belongs to the adaptor complexes large subunit family. In terms of assembly, adaptor protein complex 3 (AP-3) is a heterotetramer composed of two large adaptins (delta-type subunit and beta-type subunit), a medium adaptin (mu-type subunit) and a small adaptin (sigma-type subunit).

The protein localises to the endosome membrane. Functionally, part of the AP-3 complex, an adaptor-related complex which is essential for the compartmentalization of the endocytic pathway. The sequence is that of AP-3 complex subunit delta (ap3d1) from Dictyostelium discoideum (Social amoeba).